Consider the following 1054-residue polypeptide: CCAAT/enhancer-binding protein zeta (1054 aa).

The segment covering 1–20 (MAAVKEPLEFHAKRPWRPEE) has biased composition (basic and acidic residues). 2 disordered regions span residues 1-42 (MAAV…GFSL) and 102-160 (VEED…PKVK). Positions 21-34 (AVEDPDEEDEDNTS) are enriched in acidic residues. Residues 109–120 (EKENSSKKEVKI) show a composition bias toward basic and acidic residues. The residue at position 113 (serine 113) is a Phosphoserine. Residues 124–138 (NNKNTAESQRTSVNK) show a composition bias toward polar residues. Serine 629 is modified (phosphoserine). Lysine 695 carries the post-translational modification N6-acetyllysine. The residue at position 835 (serine 835) is a Phosphoserine. Disordered stretches follow at residues 873-902 (RTKG…DEVS) and 915-969 (DEDG…KKRN). Composition is skewed to acidic residues over residues 882–902 (LDED…DEVS) and 915–933 (DEDG…ESVP). Serine 959, serine 973, and serine 978 each carry phosphoserine. Positions 1031–1054 (IIKKKKHFKKKRIKTTQKTKKQRK) are disordered.

Belongs to the CBF/MAK21 family.

Its subcellular location is the nucleus. Stimulates transcription from the HSP70 promoter. This Homo sapiens (Human) protein is CCAAT/enhancer-binding protein zeta (CEBPZ).